A 330-amino-acid chain; its full sequence is RNA/RNP complex-1-interacting phosphatase (330 aa).

Residues 1-12 (MSQWHHPRSGWG) are compositionally biased toward basic residues. Residues 1 to 32 (MSQWHHPRSGWGRRRDFSGRSSAKKKGGNHIP) form a disordered region. The region spanning 61–208 (FEKKLAPEEC…LQNGPIRKNW (148 aa)) is the Tyrosine-protein phosphatase domain. C152 serves as the catalytic Phosphocysteine intermediate. 153 to 158 (THGLNR) is a binding site for substrate. R158 functions as the Proton donor/acceptor in the catalytic mechanism.

It belongs to the protein-tyrosine phosphatase family. Non-receptor class dual specificity subfamily. Monomer. May interact with SFRS7 and SFRS9/SRP30C.

Its subcellular location is the nucleus. It is found in the nucleus speckle. In terms of biological role, possesses RNA 5'-triphosphatase and diphosphatase activities, but displays a poor protein-tyrosine phosphatase activity. In addition, has phosphatase activity with ATP, ADP and O-methylfluorescein phosphate (in vitro). Binds to RNA. May participate in nuclear mRNA metabolism. The chain is RNA/RNP complex-1-interacting phosphatase from Homo sapiens (Human).